Consider the following 208-residue polypeptide: Molybdenum cofactor guanylyltransferase (208 aa).

Residues 10-12 (LAG), lysine 23, aspartate 69, and aspartate 103 contribute to the GTP site. Aspartate 103 contributes to the Mg(2+) binding site.

This sequence belongs to the MobA family. In terms of assembly, monomer. Mg(2+) serves as cofactor.

The protein localises to the cytoplasm. The catalysed reaction is Mo-molybdopterin + GTP + H(+) = Mo-molybdopterin guanine dinucleotide + diphosphate. In terms of biological role, transfers a GMP moiety from GTP to Mo-molybdopterin (Mo-MPT) cofactor (Moco or molybdenum cofactor) to form Mo-molybdopterin guanine dinucleotide (Mo-MGD) cofactor. The sequence is that of Molybdenum cofactor guanylyltransferase from Mesorhizobium japonicum (strain LMG 29417 / CECT 9101 / MAFF 303099) (Mesorhizobium loti (strain MAFF 303099)).